We begin with the raw amino-acid sequence, 335 residues long: Mycobacterial beta-ketoacyl-[acyl-carrier-protein] synthase III (335 aa).

Residues Cys-122 and His-258 contribute to the active site. The ACP-binding stretch occupies residues 259 to 263; that stretch reads QANSR. Residue Asn-289 is part of the active site.

The protein belongs to the thiolase-like superfamily. FabH family. As to quaternary structure, homodimer.

The protein resides in the cytoplasm. The enzyme catalyses malonyl-[ACP] + dodecanoyl-CoA + H(+) = 3-oxotetradecanoyl-[ACP] + CO2 + CoA. The protein operates within lipid metabolism; fatty acid biosynthesis. It functions in the pathway lipid metabolism; mycolic acid biosynthesis. Catalyzes the condensation reaction of fatty acid synthesis by the addition to an acyl acceptor of two carbons from malonyl-ACP. Catalyzes the first condensation reaction which initiates fatty acid synthesis and may therefore play a role in governing the total rate of fatty acid production. Possesses both acetoacetyl-ACP synthase and acetyl transacylase activities. Its substrate specificity determines the biosynthesis of branched-chain and/or straight-chain of fatty acids. In Mycobacterium marinum (strain ATCC BAA-535 / M), this protein is Mycobacterial beta-ketoacyl-[acyl-carrier-protein] synthase III.